Consider the following 361-residue polypeptide: D-alanine--D-alanine ligase (361 aa).

Residues 134–344 (KLLLKSFDIP…FKDLVDNLID (211 aa)) enclose the ATP-grasp domain. ATP is bound at residue 167 to 222 (KEVLGYPVIVKPAVLGSSIGINVAYSENQIESFIKEALKYDLTIVIEKFIEAREIE). Residues Asp297, Glu311, and Asn313 each contribute to the Mg(2+) site.

The protein belongs to the D-alanine--D-alanine ligase family. Requires Mg(2+) as cofactor. Mn(2+) serves as cofactor.

It localises to the cytoplasm. The enzyme catalyses 2 D-alanine + ATP = D-alanyl-D-alanine + ADP + phosphate + H(+). It participates in cell wall biogenesis; peptidoglycan biosynthesis. Cell wall formation. The protein is D-alanine--D-alanine ligase of Borreliella burgdorferi (strain ATCC 35210 / DSM 4680 / CIP 102532 / B31) (Borrelia burgdorferi).